An 884-amino-acid chain; its full sequence is Probable inorganic carbon transporter subunit DabA (884 aa).

The Zn(2+) site is built by C390, D392, H582, and C597.

The protein belongs to the inorganic carbon transporter (TC 9.A.2) DabA family. In terms of assembly, forms a complex with DabB. The cofactor is Zn(2+).

The protein resides in the cell membrane. Functionally, part of an energy-coupled inorganic carbon pump. The chain is Probable inorganic carbon transporter subunit DabA from Staphylococcus saprophyticus subsp. saprophyticus (strain ATCC 15305 / DSM 20229 / NCIMB 8711 / NCTC 7292 / S-41).